We begin with the raw amino-acid sequence, 234 residues long: Segregation and condensation protein A (234 aa).

It belongs to the ScpA family. In terms of assembly, component of a cohesin-like complex composed of ScpA, ScpB and the Smc homodimer, in which ScpA and ScpB bind to the head domain of Smc. The presence of the three proteins is required for the association of the complex with DNA.

The protein resides in the cytoplasm. Its function is as follows. Participates in chromosomal partition during cell division. May act via the formation of a condensin-like complex containing Smc and ScpB that pull DNA away from mid-cell into both cell halves. This chain is Segregation and condensation protein A, found in Streptococcus pyogenes serotype M18 (strain MGAS8232).